The primary structure comprises 557 residues: Prosaposin (557 aa).

The first 16 residues, 1-16, serve as a signal peptide directing secretion; the sequence is MYALALFASLLATALT. A propeptide spanning residues 17-59 is cleaved from the precursor; it reads SPVQDPKTCSGGSAVLCRDVKTAVDCGAVKHCQQMVWSKPTAK. The region spanning 18–58 is the Saposin A-type 1 domain; the sequence is PVQDPKTCSGGSAVLCRDVKTAVDCGAVKHCQQMVWSKPTA. Saposin B-type domains are found at residues 59-142, 193-277, 313-394, and 438-519; these read KSLP…QSLQ, NEDV…NEVK, NVIL…AARP, and NGGF…PSAY. 3 cysteine pairs are disulfide-bonded: cysteine 63/cysteine 138, cysteine 66/cysteine 132, and cysteine 94/cysteine 106. A glycan (N-linked (GlcNAc...) asparagine) is linked at asparagine 80. A propeptide spanning residues 143-193 is cleaved from the precursor; the sequence is EYLAEQNQKQLESNKIPEVDMARVVAPFMSNIPLLLYPQDHPRSQPQPKAN. Cystine bridges form between cysteine 197-cysteine 273, cysteine 200-cysteine 267, and cysteine 229-cysteine 240. Asparagine 214 carries an N-linked (GlcNAc...) asparagine glycan. A propeptide spanning residues 277-312 is cleaved from the precursor; that stretch reads KRVPMKTLVPATETIKNILPALEMMDPYEQNLVQAH. Disulfide bonds link cysteine 317-cysteine 390, cysteine 320-cysteine 384, and cysteine 348-cysteine 359. A glycan (N-linked (GlcNAc...) asparagine) is linked at asparagine 334. Residues 393–437 constitute a propeptide that is removed on maturation; the sequence is RPELVEALEQPAPAIVSALLKEPTPPKQPAQPKQSALPAHVPPQK. 3 disulfides stabilise this stretch: cysteine 442/cysteine 515, cysteine 445/cysteine 509, and cysteine 473/cysteine 484. Asparagine 459 carries an N-linked (GlcNAc...) asparagine glycan. A propeptide spanning residues 520 to 557 is cleaved from the precursor; sequence KLLLGTEKCVWGPSYWCQNMETAARCNAVDHCKRHVWN. Residues 521–557 enclose the Saposin A-type 2 domain; the sequence is LLLGTEKCVWGPSYWCQNMETAARCNAVDHCKRHVWN.

As to quaternary structure, saposin-B is a homodimer. Prosaposin exists as a roughly half-half mixture of monomers and disulfide-linked dimers. Monomeric prosaposin interacts (via C-terminus) with sortilin/SORT1, the interaction is required for targeting to lysosomes. Interacts with GRN; facilitates lysosomal delivery of progranulin from the extracellular space and the biosynthetic pathway.

The protein localises to the secreted. It localises to the lysosome. Its function is as follows. Behaves as a myelinotrophic and neurotrophic factor, these effects are mediated by its G-protein-coupled receptors, GPR37 and GPR37L1, undergoing ligand-mediated internalization followed by ERK phosphorylation signaling. In terms of biological role, saposin-A and saposin-C stimulate the hydrolysis of glucosylceramide by beta-glucosylceramidase (EC 3.2.1.45) and galactosylceramide by beta-galactosylceramidase (EC 3.2.1.46). Saposin-C apparently acts by combining with the enzyme and acidic lipid to form an activated complex, rather than by solubilizing the substrate. Saposin-B stimulates the hydrolysis of galacto-cerebroside sulfate by arylsulfatase A (EC 3.1.6.8), GM1 gangliosides by beta-galactosidase (EC 3.2.1.23) and globotriaosylceramide by alpha-galactosidase A (EC 3.2.1.22). Saposin-B forms a solubilizing complex with the substrates of the sphingolipid hydrolases. Functionally, saposin-D is a specific sphingomyelin phosphodiesterase activator (EC 3.1.4.12). Its function is as follows. Saposins are specific low-molecular mass non-enzymatic proteins, they participate in the lysosomal degradation of sphingolipids, which takes place by the sequential action of specific hydrolases. This is Prosaposin (Psap) from Mus musculus (Mouse).